The chain runs to 437 residues: MLANVTRSTSKAAPALASIAQTAQKRFLSVHEYCSMNLLHEYNVNAPKGIVAKTPEEAYQAAKKLNTEDLVIKAQVLAGGRGKGHFDSGLQGGVKLCYTPEQVKDYASKMLGHKLITKQTGAAGRDCNAVYVVERQYAAREYYFAILLDRATRGPVLVASSEGGVEIEEVAKTNPDAILTVPFSIKTGLTREVALDTAKKMGFTEKCVPQAADTFMKLYKIFIEKDATMVEINPMAENNRGEVVCMDAKFGFDDNASYKPKGIFALRDTTQEDPREVAGHAKWNLNYVGMEGNIGCLVNGAGLAMATMDIIKLNGGVPANFLDVGGSATAKQVKEAFKIISSDKAVSAILVNIFGGIMRCDIVAEGVIQAVKELGLDIPLVVRLQGTKVEEARELIKNSNLSLYAIDDLDKAAKKVVQLANVVGLAKENGIKIKIEN.

Residues 1 to 27 (MLANVTRSTSKAAPALASIAQTAQKRF) constitute a hydrogenosome transit peptide. The 243-residue stretch at 36-278 (MNLLHEYNVN…TTQEDPREVA (243 aa)) folds into the ATP-grasp domain. ATP contacts are provided by residues K73, 80–82 (GRG), and E141. Mg(2+) contacts are provided by N233 and D247. Substrate contacts are provided by residues N299 and 356 to 358 (GIM).

It belongs to the succinate/malate CoA ligase beta subunit family. In terms of assembly, heterodimer of an alpha and a beta subunit. Requires Mg(2+) as cofactor.

It is found in the hydrogenosome. The catalysed reaction is succinate + ATP + CoA = succinyl-CoA + ADP + phosphate. It participates in carbohydrate metabolism; tricarboxylic acid cycle; succinate from succinyl-CoA (ligase route): step 1/1. Succinyl-CoA synthetase functions in the citric acid cycle (TCA), coupling the hydrolysis of succinyl-CoA to the synthesis of ATP and thus represents the only step of substrate-level phosphorylation in the TCA. The beta subunit provides nucleotide specificity of the enzyme and binds the substrate succinate, while the binding sites for coenzyme A and phosphate are found in the alpha subunit. This Neocallimastix frontalis (Rumen fungus) protein is Succinate--CoA ligase [ADP-forming] subunit beta, hydrogenosomal.